The chain runs to 108 residues: Peptidyl-prolyl cis-trans isomerase FKBP1A (108 aa).

Residues 20 to 108 (GQTCVVHYTG…IFDVELLKLE (89 aa)) enclose the PPIase FKBP-type domain. At Lys53 the chain carries N6-acetyllysine; alternate. The residue at position 53 (Lys53) is an N6-succinyllysine; alternate.

The protein belongs to the FKBP-type PPIase family. FKBP1 subfamily. As to quaternary structure, interacts with TGFBR1; prevents TGFBR1 phosphorylation by TGFBR2 and stabilizes it in the inactive conformation. Interacts with ACVR1B and SMAD7. Identified in a complex composed of RYR1, PDE4D, PKA, FKBP1A and protein phosphatase 1 (PP1). Interacts directly with RYR2 and RYR3. Interacts with GLMN; rapamycin and FK506 abolish the interaction with GLMN in a dose dependent manner. Interacts directly with RYR1.

Its subcellular location is the cytoplasm. It localises to the cytosol. The protein localises to the sarcoplasmic reticulum membrane. It carries out the reaction [protein]-peptidylproline (omega=180) = [protein]-peptidylproline (omega=0). Its activity is regulated as follows. Inhibited by both FK506 and rapamycin. Its function is as follows. Keeps in an inactive conformation TGFBR1, the TGF-beta type I serine/threonine kinase receptor, preventing TGF-beta receptor activation in absence of ligand. May modulate the RYR1 calcium channel activity. PPIases accelerate the folding of proteins. It catalyzes the cis-trans isomerization of proline imidic peptide bonds in oligopeptides. The polypeptide is Peptidyl-prolyl cis-trans isomerase FKBP1A (FKBP1A) (Bos taurus (Bovine)).